A 69-amino-acid chain; its full sequence is Toxin Tma3 (69 aa).

An LCN-type CS-alpha/beta domain is found at 2–66 (KDDYPVDTAK…SPTKKSGRCN (65 aa)). Intrachain disulfides connect C14–C65, C18–C41, C27–C48, and C31–C50.

Belongs to the long (4 C-C) scorpion toxin superfamily. Sodium channel inhibitor family. As to expression, expressed by the venom gland.

Its subcellular location is the secreted. Functionally, inhibits voltage-gated sodium channels (Nav). This toxin shows insect lethality against crickets. The chain is Toxin Tma3 from Tityus macrochirus (Scorpion).